A 335-amino-acid chain; its full sequence is DNA-directed RNA polymerase subunit alpha (335 aa).

The tract at residues 1-233 is alpha N-terminal domain (alpha-NTD); it reads MTRTANEFLT…QQIAIFVDLQ (233 aa). The segment at 247-335 is alpha C-terminal domain (alpha-CTD); the sequence is VDPILLRPVD…MDDRFAYRSR (89 aa).

The protein belongs to the RNA polymerase alpha chain family. In terms of assembly, homodimer. The RNAP catalytic core consists of 2 alpha, 1 beta, 1 beta' and 1 omega subunit. When a sigma factor is associated with the core the holoenzyme is formed, which can initiate transcription.

It catalyses the reaction RNA(n) + a ribonucleoside 5'-triphosphate = RNA(n+1) + diphosphate. DNA-dependent RNA polymerase catalyzes the transcription of DNA into RNA using the four ribonucleoside triphosphates as substrates. This chain is DNA-directed RNA polymerase subunit alpha, found in Acinetobacter baumannii (strain AB307-0294).